Reading from the N-terminus, the 192-residue chain is Leucine-rich repeat-containing protein 51 (192 aa).

LRR repeat units follow at residues 49-71 (SLTQ…NQVA), 80-101 (NLAW…LTTF), and 103-124 (NLSV…NKLA). In terms of domain architecture, LRRCT spans 137 to 175 (NPMEEEKGYRQYVLCTLSRITTFDFAGVTKADRTTAEVW).

Its subcellular location is the cytoplasm. This Pan troglodytes (Chimpanzee) protein is Leucine-rich repeat-containing protein 51.